We begin with the raw amino-acid sequence, 1172 residues long: MPDQDKKVKTTEKSTDKQQEITIRDYSDLKRLRCLLNVQSSKQQLPAINFDSAQNSMTKSEPAIRAGGHRARGQWHESTEAVELENFSINYKNERNFSKHPQRKLFQEIFTALVKNRLISREWVNRAPSIHFLRVLICLRLLMRDPCYQEILHSLGGIENLAQYMEIVANEYLGYGEEQHTVDKLVNMTYIFQKLAAVKDQREWVTTSGAHKTLVNLLGARDTNVLLGSLLALASLAESQECREKISELNIVENLLMILHEYDLLSKRLTAELLRLLCAEPQVKEQVKLYEGIPVLLSLLHSDHLKLLWSIVWILVQVCEDPETSVEIRIWGGIKQLLHILQGDRNFVSDHSSIGSLSSANAAGRIQQLHLSEDLSPREIQENTFSLQAACCAALTELVLNDTNAHQVVQENGVYTIAKLILPNKQKNAAKSNLLQCYAFRALRFLFSMERNRPLFKRLFPTDLFEIFIDIGHYVRDISAYEELVSKLNLLVEDELKQIAENIESINQNKAPLKYIGNYAILDHLGSGAFGCVYKVRKHSGQNLLAMKEVNLHNPAFGKDKKDRDSSVRNIVSELTIIKEQLYHPNIVRYYKTFLENDRLYIVMELIEGAPLGEHFSSLKEKHHHFTEERLWKIFIQLCLALRYLHKEKRIVHRDLTPNNIMLGDKDKVTVTDFGLAKQKQENSKLTSVVGTILYSCPEVLKSEPYGEKADVWAVGCILYQMATLSPPFYSTNMLSLATKIVEAVYEPVPEGIYSEKVTDTISRCLTPDAEARPDIVEVSSMISDVMMKYLDNLSTSQLSLEKKLERERRRTQRYFMEANRNTVTCHHELAVLSHETFEKASLSSSSSGAASLKSELSESADLPPEGFQASYGKDEDRACDEILSDDNFNLENAEKDTYSEVDDELDISDNSSSSSSSPLKESTFNILKRSFSASGGERQSQTRDFTGGTGSRPRPALLPLDLLLKVPPHMLRAHIKEIEAELVTGWQSHSLPAVILRNLKDHGPQMGTFLWQASAGIAVSQRKVRQISDPIQQILIQLHKIIYITQLPPALHHNLKRRVIERFKKSLFSQQSNPCNLKSEIKKLSQGSPEPIEPNFFTADYHLLHRSSGGNSLSPNDPTGLPTSIELEEGITYEQMQTVIEEVLEESGYYNFTSNRYHSYPWGTKNHPTKR.

The stretch at 209-251 is one ARM repeat; sequence GAHKTLVNLLGARDTNVLLGSLLALASLAESQECREKISELNI. A coiled-coil region spans residues 481 to 514; the sequence is YEELVSKLNLLVEDELKQIAENIESINQNKAPLK. A Protein kinase domain is found at 519-712; the sequence is YAILDHLGSG…SEPYGEKADV (194 aa). Residues 525 to 533 and lysine 548 contribute to the ATP site; that span reads LGSGAFGCV. The Proton acceptor role is filled by aspartate 655. Disordered regions lie at residues 855-875 and 898-954; these read SELS…YGKD and TYSE…GSRP. The span at 919 to 945 shows a compositional bias: polar residues; it reads PLKESTFNILKRSFSASGGERQSQTRD.

The protein belongs to the protein kinase superfamily. NEK Ser/Thr protein kinase family. NIMA subfamily. As to quaternary structure, interacts with RAF1 and MAP2K1; the interaction is direct with RAF1 and required for ERK1/2-signaling pathway activation in response to UV irradiation. Mg(2+) is required as a cofactor. As to expression, expressed in the lung.

The catalysed reaction is L-seryl-[protein] + ATP = O-phospho-L-seryl-[protein] + ADP + H(+). The enzyme catalyses L-threonyl-[protein] + ATP = O-phospho-L-threonyl-[protein] + ADP + H(+). Plays a role in the cellular response to UV irradiation. Mediates G2/M cell cycle arrest, MEK autoactivation and ERK1/2-signaling pathway activation in response to UV irradiation. In ciliated cells of airways, it is involved in the regulation of mucociliary transport. The chain is Serine/threonine-protein kinase Nek10 from Homo sapiens (Human).